We begin with the raw amino-acid sequence, 614 residues long: Acetylcholinesterase (614 aa).

A signal peptide spans 1 to 31 (MRPPQCLLHTPSLASPLLLLLLWLLGGGVGA). Cysteines 100 and 127 form a disulfide. Position 117 (Trp117) interacts with galanthamine. Trp117 lines the huperzine A pocket. A huprine W-binding site is contributed by Gly153. Tyr164 provides a ligand contact to huperzine A. 233–234 (ES) is a galanthamine binding site. Ser234 contributes to the huprine W binding site. The active-site Acyl-ester intermediate is the Ser234. Cys288 and Cys303 are joined by a disulfide. Residue Asn296 is glycosylated (N-linked (GlcNAc...) asparagine). Glu365 acts as the Charge relay system in catalysis. Galanthamine is bound at residue Tyr368. Tyr368 contacts huperzine A. Asn381 carries N-linked (GlcNAc...) asparagine glycosylation. Cys440 and Cys560 form a disulfide bridge. Huprine W contacts are provided by Trp470 and His478. His478 acts as the Charge relay system in catalysis. A glycan (N-linked (GlcNAc...) asparagine) is linked at Asn495. The GPI-anchor amidated glycine moiety is linked to residue Phe588.

It belongs to the type-B carboxylesterase/lipase family. In terms of assembly, interacts with PRIMA1. The interaction with PRIMA1 is required to anchor it to the basal lamina of cells and organize into tetramers. Isoform H generates GPI-anchored dimers; disulfide linked. Isoform T generates multiple structures, ranging from monomers and dimers to collagen-tailed and hydrophobic-tailed forms, in which catalytic tetramers are associated with anchoring proteins that attach them to the basal lamina or to cell membranes. In the collagen-tailed forms, isoform T subunits are associated with a specific collagen, COLQ, which triggers the formation of isoform T tetramers, from monomers and dimers. Isoform R may be monomeric. In terms of tissue distribution, isoform H is highly expressed in erythrocytes.

The protein resides in the synapse. Its subcellular location is the secreted. It localises to the cell membrane. The protein localises to the nucleus. It catalyses the reaction acetylcholine + H2O = choline + acetate + H(+). Functionally, hydrolyzes rapidly the acetylcholine neurotransmitter released into the synaptic cleft allowing to terminate the signal transduction at the neuromuscular junction. Role in neuronal apoptosis. The sequence is that of Acetylcholinesterase from Homo sapiens (Human).